We begin with the raw amino-acid sequence, 397 residues long: Phosphoglycerate kinase (397 aa).

Substrate-binding positions include 21–23 (DFN), R36, 59–62 (HCGR), R118, and R151. ATP is bound by residues K201, E323, and 353-356 (GGDT).

It belongs to the phosphoglycerate kinase family. In terms of assembly, monomer.

The protein resides in the cytoplasm. It carries out the reaction (2R)-3-phosphoglycerate + ATP = (2R)-3-phospho-glyceroyl phosphate + ADP. The protein operates within carbohydrate degradation; glycolysis; pyruvate from D-glyceraldehyde 3-phosphate: step 2/5. This is Phosphoglycerate kinase from Bartonella quintana (strain Toulouse) (Rochalimaea quintana).